The sequence spans 161 residues: Photosystem I reaction center subunit XI (161 aa).

Helical transmembrane passes span 84–104 and 126–146; these read LIST…YGLV and FTGG…FLLE.

This sequence belongs to the PsaL family.

The protein localises to the cellular thylakoid membrane. This Trichodesmium erythraeum (strain IMS101) protein is Photosystem I reaction center subunit XI.